The sequence spans 100 residues: MTPWFLYLIRTADNKLYTGITTDVERRYQQHQSGKGAKALRGKGELTLAFSAPVGDRSLALRAEYRVKQLTKRQKERLVAEGAGFAKLLSSLQTPEIKSD.

In terms of domain architecture, GIY-YIG spans 2 to 77 (TPWFLYLIRT…KQLTKRQKER (76 aa)).

It belongs to the UPF0213 family.

The sequence is that of UPF0213 protein YhbQ from Escherichia coli O157:H7.